A 1025-amino-acid chain; its full sequence is Multidrug resistance protein MdtC (1025 aa).

The next 12 helical transmembrane spans lie at 15–35 (ILIS…LPVA), 333–353 (EVEQ…FLFL), 360–380 (LIPA…MYLC), 387–407 (LSLM…IVVL), 431–451 (VGFT…PLLL), 469–489 (VAIG…CGWL), 528–548 (LTGL…ISIP), 851–871 (AQVI…GVLY), 875–895 (VHPL…LLAL), 897–917 (IFDA…IGIV), 953–973 (PIMM…LSGG), and 984–1004 (ITIV…TPVV).

The protein belongs to the resistance-nodulation-cell division (RND) (TC 2.A.6) family. MdtC subfamily. As to quaternary structure, part of a tripartite efflux system composed of MdtA, MdtB and MdtC. MdtC forms a heteromultimer with MdtB.

It is found in the cell inner membrane. The chain is Multidrug resistance protein MdtC from Klebsiella pneumoniae subsp. pneumoniae (strain ATCC 700721 / MGH 78578).